A 290-amino-acid polypeptide reads, in one-letter code: Ribosomal large subunit pseudouridine synthase B (290 aa).

One can recognise an S4 RNA-binding domain in the interval 3 to 75 (EKLQKVLARA…ICRVLAYYKP (73 aa)). The active-site Nucleophile is D110. Residues 256-290 (VEKDRRRMKANQIRRAVKRHSQVSGGRRSGGRNNG) form a disordered region.

Belongs to the pseudouridine synthase RsuA family.

The catalysed reaction is uridine(2605) in 23S rRNA = pseudouridine(2605) in 23S rRNA. Responsible for synthesis of pseudouridine from uracil-2605 in 23S ribosomal RNA. The protein is Ribosomal large subunit pseudouridine synthase B (rluB) of Escherichia coli O157:H7.